The sequence spans 462 residues: Hemopexin (462 aa).

An N-terminal signal peptide occupies residues 1-23 (MARVLGAPVALGLWSLCWSLAIA). 2 O-linked (GalNAc...) threonine glycosylation sites follow: threonine 24 and threonine 29. The tract at residues 29–48 (TSAHGNVAEGETKPDPDVTE) is disordered. Residues 30–40 (SAHGNVAEGET) form an O-glycosylated at one site region. Residues 38–48 (GETKPDPDVTE) are compositionally biased toward basic and acidic residues. 3 cysteine pairs are disulfide-bonded: cysteine 50–cysteine 231, cysteine 149–cysteine 154, and cysteine 188–cysteine 200. 4 Hemopexin repeats span residues 53–93 (GWSF…WKNF), 94–139 (PSPV…FPGI), 140–184 (PSPL…SWPA), and 185–231 (VGNC…FMPC). Asparagine 64 is a glycosylation site (N-linked (GlcNAc...) (complex) asparagine). Histidine 79 lines the heme pocket. A heme-binding site is contributed by histidine 150. N-linked (GlcNAc...) (complex) asparagine glycosylation occurs at asparagine 187. Heme is bound at residue histidine 236. 2 N-linked (GlcNAc...) asparagine glycosylation sites follow: asparagine 240 and asparagine 246. 3 cysteine pairs are disulfide-bonded: cysteine 257-cysteine 460, cysteine 366-cysteine 408, and cysteine 418-cysteine 435. Hemopexin repeat units lie at residues 259 to 304 (PHLV…WPQG), 305 to 352 (PSAV…VGTP), 357 to 396 (LDSV…WTEL), and 400 to 450 (HEKV…ALPQ). Position 293 (histidine 293) interacts with heme. An N-linked (GlcNAc...) (complex) asparagine glycan is attached at asparagine 453.

This sequence belongs to the hemopexin family. In terms of assembly, interacts with FLVCR1. As to quaternary structure, (Microbial infection) Interacts with hepatitis E virus/HEV protein ORF3. In terms of processing, N- and O-glycosylated. O-glycosylated with core 1 or possibly core 8 glycans. O-glycosylation in the 30-40 region is minor compared to glycosylation at Thr-24 and Thr-29. As to expression, expressed by the liver and secreted in plasma.

Its subcellular location is the secreted. Binds heme and transports it to the liver for breakdown and iron recovery, after which the free hemopexin returns to the circulation. This Homo sapiens (Human) protein is Hemopexin (HPX).